The chain runs to 291 residues: N-acetylmannosamine kinase (291 aa).

ATP-binding positions include 5-12 (AIDIGGTK) and 132-139 (GVGGGVVS). The Zn(2+) site is built by H156, C166, C168, and C173.

Belongs to the ROK (NagC/XylR) family. NanK subfamily. In terms of assembly, homodimer.

The catalysed reaction is an N-acyl-D-mannosamine + ATP = an N-acyl-D-mannosamine 6-phosphate + ADP + H(+). It participates in amino-sugar metabolism; N-acetylneuraminate degradation; D-fructose 6-phosphate from N-acetylneuraminate: step 2/5. Functionally, catalyzes the phosphorylation of N-acetylmannosamine (ManNAc) to ManNAc-6-P. In Escherichia coli O139:H28 (strain E24377A / ETEC), this protein is N-acetylmannosamine kinase.